Consider the following 368-residue polypeptide: MTVKLTIDCMGGDHGPSVTVPAAVKFVRAHPDAHLMLVGIESAIRAQLKKLKALDDPALTIVPATEVVAMDDPVEVALRKKKDSSMRVALNHVKEGAAQACISAGNTGALMAVSRYVLKTLPGIERPAIAFALPNPTGYTMMLDLGANVDCEPQHLLQFAEMGHALVAALEGKERPTIGLLNIGEEVIKGNETIKRAGELLRASTLNFRGNVEGNDIYKGTVDVIVCDGFVGNVALKTSEGLAQMLSDIIREEFGRSLMSKLMALLALPVLMRFKKRVDHRQYNGAALLGLKSLVIKSHGSADAYAFEWAIKRGYDAVKNGVLERLARAMADNSVSLGDGEHDAGGAGQASPAAGHHAEPSAAQSSKA.

The interval 337-368 (LGDGEHDAGGAGQASPAAGHHAEPSAAQSSKA) is disordered.

Belongs to the PlsX family. As to quaternary structure, homodimer. Probably interacts with PlsY.

It localises to the cytoplasm. It carries out the reaction a fatty acyl-[ACP] + phosphate = an acyl phosphate + holo-[ACP]. It functions in the pathway lipid metabolism; phospholipid metabolism. Its function is as follows. Catalyzes the reversible formation of acyl-phosphate (acyl-PO(4)) from acyl-[acyl-carrier-protein] (acyl-ACP). This enzyme utilizes acyl-ACP as fatty acyl donor, but not acyl-CoA. In Burkholderia orbicola (strain MC0-3), this protein is Phosphate acyltransferase.